The sequence spans 113 residues: uncharacterized protein (113 aa).

Positions 1-29 (MLVVYMCIWVLYLLLFLFLFLFIASPASL) are cleaved as a signal peptide. 2 helical membrane-spanning segments follow: residues 34–54 (THILQCLYYFSLLLISGCAFF) and 56–76 (QVLCLVLPLFCFVLFCFFYFF).

It is found in the membrane. This is an uncharacterized protein from Saccharomyces cerevisiae (strain ATCC 204508 / S288c) (Baker's yeast).